A 141-amino-acid chain; its full sequence is Nucleoside diphosphate kinase (141 aa).

Residues K11, F59, R87, T93, R104, and N114 each contribute to the ATP site. Residue H117 is the Pros-phosphohistidine intermediate of the active site.

Belongs to the NDK family. In terms of assembly, homotetramer. It depends on Mg(2+) as a cofactor.

Its subcellular location is the cytoplasm. The enzyme catalyses a 2'-deoxyribonucleoside 5'-diphosphate + ATP = a 2'-deoxyribonucleoside 5'-triphosphate + ADP. It carries out the reaction a ribonucleoside 5'-diphosphate + ATP = a ribonucleoside 5'-triphosphate + ADP. In terms of biological role, major role in the synthesis of nucleoside triphosphates other than ATP. The ATP gamma phosphate is transferred to the NDP beta phosphate via a ping-pong mechanism, using a phosphorylated active-site intermediate. The chain is Nucleoside diphosphate kinase from Mannheimia succiniciproducens (strain KCTC 0769BP / MBEL55E).